Consider the following 411-residue polypeptide: Dihydrosphingosine 1-phosphate phosphatase C823.11 (411 aa).

The Lumenal segment spans residues 1-74 (MVHKKKNVDI…LDVYFMYTAT (74 aa)). Residues 75–95 (LGTHVFFMLALPIFFWSGCIY) traverse the membrane as a helical segment. At 96–99 (YTLD) the chain is on the cytoplasmic side. Residues 100 to 120 (ITQLFAAGVYFSGCIKDYFCL) traverse the membrane as a helical segment. The phosphatase sequence motif I stretch occupies residues 115-123 (KDYFCLPRP). At 121–170 (PRPRSPPMVRLTLSSDAEYEYGFPSTHTTNAMATGFYSLFLLLSMSDSMS) the chain is on the lumenal side. Residues 144–147 (PSTH) are phosphatase sequence motif II. The active-site Proton donor is histidine 147. A helical transmembrane segment spans residues 171–191 (SISYYFLLSLVLLYIASISLG). Positions 191-202 (GRIYCGMHGFMD) are phosphatase sequence motif III. Topologically, residues 192–195 (RIYC) are cytoplasmic. The chain crosses the membrane as a helical span at residues 196 to 216 (GMHGFMDVSTGTILGVTLAIF). Residue histidine 198 is the Nucleophile of the active site. The Lumenal segment spans residues 217–233 (QWKYADFFHNVWSSSST). The helical transmembrane segment at 234–254 (SVPILSVVLALFFIWFHPQPA) threads the bilayer. Topologically, residues 255–259 (ERCIC) are cytoplasmic. A helical membrane pass occupies residues 260 to 280 (LEDSISFISVIMGIDLGTWFA). Over 281–293 (SPESLSHLHDNLN) the chain is Lumenal. A helical transmembrane segment spans residues 294-314 (SYFLLKFFVRVLFGVCMILIW). Topologically, residues 315 to 387 (KSFAKQALLA…VRFDIETIAR (73 aa)) are cytoplasmic. Residues 388 to 408 (IIVYSGIGFLCTYFAPKVFLK) traverse the membrane as a helical segment. Topologically, residues 409-411 (WKI) are lumenal.

The protein belongs to the type 2 lipid phosphate phosphatase family.

It is found in the endoplasmic reticulum membrane. Functionally, dihydrosphingosine 1-phosphate phosphatase required for efficient ceramide synthesis from exogenous sphingoid bases. Involved in endocytosis and calcium-mediated signaling. The polypeptide is Dihydrosphingosine 1-phosphate phosphatase C823.11 (Schizosaccharomyces pombe (strain 972 / ATCC 24843) (Fission yeast)).